A 357-amino-acid polypeptide reads, in one-letter code: Guanine nucleotide-binding protein alpha-1 subunit (357 aa).

Residue G2 is the site of N-myristoyl glycine attachment. C4 carries S-palmitoyl cysteine lipidation. The G-alpha domain occupies 32-357; it reads NVIKLLLLGA…SSKLKGCGLF (326 aa). The tract at residues 35 to 48 is G1 motif; the sequence is KLLLLGAGESGKST. Residues E43, S44, G45, K46, S47, T48, D151, L176, T182, G204, N270, K271, D273, and A329 each contribute to the GTP site. Residue S47 coordinates Mg(2+). The tract at residues 174–182 is G2 motif; sequence DILHTRVPT. T182 is a Mg(2+) binding site. Residues 197 to 206 are G3 motif; it reads FRVFDVGGQR. A G4 motif region spans residues 266–273; that stretch reads ILFLNKVD. The interval 327 to 332 is G5 motif; sequence TCATDT.

The protein belongs to the G-alpha family. G(q) subfamily. As to quaternary structure, g proteins are composed of 3 units; alpha, beta and gamma. The alpha chain contains the guanine nucleotide binding site. Mg(2+) serves as cofactor.

Guanine nucleotide-binding proteins (G proteins) are involved as modulators or transducers in various transmembrane signaling systems. This is Guanine nucleotide-binding protein alpha-1 subunit (gpa-1) from Caenorhabditis briggsae.